Reading from the N-terminus, the 46-residue chain is DNA-directed RNA polymerase subunit Rpo12 (46 aa).

Zn(2+) contacts are provided by cysteine 9, cysteine 24, and cysteine 27.

The protein belongs to the archaeal Rpo12/eukaryotic RPC10 RNA polymerase subunit family. As to quaternary structure, part of the RNA polymerase complex. Interacts with Rpo3. Forms an Rpo3-Rpo10-Rpo11-Rpo12 complex upon coexpression. The cofactor is Zn(2+).

It is found in the cytoplasm. It catalyses the reaction RNA(n) + a ribonucleoside 5'-triphosphate = RNA(n+1) + diphosphate. Its function is as follows. DNA-dependent RNA polymerase (RNAP) catalyzes the transcription of DNA into RNA using the four ribonucleoside triphosphates as substrates. This is DNA-directed RNA polymerase subunit Rpo12 from Methanocaldococcus jannaschii (strain ATCC 43067 / DSM 2661 / JAL-1 / JCM 10045 / NBRC 100440) (Methanococcus jannaschii).